The primary structure comprises 142 residues: Cystatin-8 (142 aa).

The first 19 residues, 1-19, serve as a signal peptide directing secretion; sequence MAKPLWLSLILFIIPVALA. An N-linked (GlcNAc...) asparagine glycan is attached at Asn39. The short motif at 77-81 is the Secondary area of contact element; that stretch reads QITDR. 2 cysteine pairs are disulfide-bonded: Cys95–Cys105 and Cys119–Cys139. Asn100 carries N-linked (GlcNAc...) asparagine glycosylation.

Belongs to the cystatin family. As to expression, proximal caput region of the epididymis. Lower expression in the testis. Within the testis it is localized to the elongating spermatids, whereas within the epididymis it is exclusively synthesized by the proximal caput epithelium.

The protein resides in the secreted. Performs a specialized role during sperm development and maturation. This chain is Cystatin-8 (Cst8), found in Mus musculus (Mouse).